A 367-amino-acid polypeptide reads, in one-letter code: F-box protein At3g56470 (367 aa).

Residues 1–18 show a composition bias toward basic residues; it reads MVTRRRSKKKKKTKRKKQ. The disordered stretch occupies residues 1-24; sequence MVTRRRSKKKKKTKRKKQSSKEKE. The region spanning 26-81 is the F-box domain; the sequence is YQTFINLPCDLLQLVISRLPLKDNIRASAVCKTWHEACVSLRVIHTSPWLIYFSKT.

This Arabidopsis thaliana (Mouse-ear cress) protein is F-box protein At3g56470.